Consider the following 353-residue polypeptide: S-adenosylmethionine:tRNA ribosyltransferase-isomerase (353 aa).

It belongs to the QueA family. In terms of assembly, monomer.

It is found in the cytoplasm. It carries out the reaction 7-aminomethyl-7-carbaguanosine(34) in tRNA + S-adenosyl-L-methionine = epoxyqueuosine(34) in tRNA + adenine + L-methionine + 2 H(+). The protein operates within tRNA modification; tRNA-queuosine biosynthesis. Functionally, transfers and isomerizes the ribose moiety from AdoMet to the 7-aminomethyl group of 7-deazaguanine (preQ1-tRNA) to give epoxyqueuosine (oQ-tRNA). This is S-adenosylmethionine:tRNA ribosyltransferase-isomerase from Marinomonas sp. (strain MWYL1).